The chain runs to 453 residues: Ribulose bisphosphate carboxylase large chain (453 aa).

The propeptide occupies 1–2; the sequence is MS. Pro3 is subject to N-acetylproline. Residue Lys14 is modified to N6,N6,N6-trimethyllysine. Substrate-binding residues include Asn123 and Thr173. Lys175 acts as the Proton acceptor in catalysis. Lys177 contacts substrate. Mg(2+)-binding residues include Lys201, Asp203, and Glu204. Lys201 is modified (N6-carboxylysine). Catalysis depends on His294, which acts as the Proton acceptor. Substrate contacts are provided by Arg295, His327, and Ser379.

This sequence belongs to the RuBisCO large chain family. Type I subfamily. In terms of assembly, heterohexadecamer of 8 large chains and 8 small chains; disulfide-linked. The disulfide link is formed within the large subunit homodimers. Mg(2+) serves as cofactor. Post-translationally, the disulfide bond which can form in the large chain dimeric partners within the hexadecamer appears to be associated with oxidative stress and protein turnover.

It is found in the plastid. The protein resides in the chloroplast. The enzyme catalyses 2 (2R)-3-phosphoglycerate + 2 H(+) = D-ribulose 1,5-bisphosphate + CO2 + H2O. It carries out the reaction D-ribulose 1,5-bisphosphate + O2 = 2-phosphoglycolate + (2R)-3-phosphoglycerate + 2 H(+). In terms of biological role, ruBisCO catalyzes two reactions: the carboxylation of D-ribulose 1,5-bisphosphate, the primary event in carbon dioxide fixation, as well as the oxidative fragmentation of the pentose substrate in the photorespiration process. Both reactions occur simultaneously and in competition at the same active site. This chain is Ribulose bisphosphate carboxylase large chain, found in Galium corsicum.